The sequence spans 286 residues: 4-hydroxybenzoate octaprenyltransferase (286 aa).

The next 8 helical transmembrane spans lie at 20–40, 43–63, 95–115, 116–136, 142–162, 167–187, 210–230, and 235–255; these read IGTF…AGGM, LKVL…GCII, ILFV…NPLV, VQLS…KRFT, FLGV…LGTV, WWLF…YAMV, QIIG…GLSA, and VFAL…KLIF.

It belongs to the UbiA prenyltransferase family. Mg(2+) is required as a cofactor.

It localises to the cell inner membrane. It catalyses the reaction all-trans-octaprenyl diphosphate + 4-hydroxybenzoate = 4-hydroxy-3-(all-trans-octaprenyl)benzoate + diphosphate. The protein operates within cofactor biosynthesis; ubiquinone biosynthesis. Catalyzes the prenylation of para-hydroxybenzoate (PHB) with an all-trans polyprenyl group. Mediates the second step in the final reaction sequence of ubiquinone-8 (UQ-8) biosynthesis, which is the condensation of the polyisoprenoid side chain with PHB, generating the first membrane-bound Q intermediate 3-octaprenyl-4-hydroxybenzoate. In Shewanella loihica (strain ATCC BAA-1088 / PV-4), this protein is 4-hydroxybenzoate octaprenyltransferase.